Reading from the N-terminus, the 342-residue chain is Ribosomal RNA small subunit methyltransferase C (342 aa).

Belongs to the methyltransferase superfamily. RsmC family. Monomer.

The protein localises to the cytoplasm. It catalyses the reaction guanosine(1207) in 16S rRNA + S-adenosyl-L-methionine = N(2)-methylguanosine(1207) in 16S rRNA + S-adenosyl-L-homocysteine + H(+). Its function is as follows. Specifically methylates the guanine in position 1207 of 16S rRNA in the 30S particle. The chain is Ribosomal RNA small subunit methyltransferase C from Shewanella piezotolerans (strain WP3 / JCM 13877).